We begin with the raw amino-acid sequence, 92 residues long: Small ribosomal subunit protein uS19 (92 aa).

Positions 73–92 are disordered; it reads EFSPTRSFRGHAGAKNKGRK. The segment covering 80-92 has biased composition (basic residues); that stretch reads FRGHAGAKNKGRK.

Belongs to the universal ribosomal protein uS19 family.

In terms of biological role, protein S19 forms a complex with S13 that binds strongly to the 16S ribosomal RNA. In Christiangramia forsetii (strain DSM 17595 / CGMCC 1.15422 / KT0803) (Gramella forsetii), this protein is Small ribosomal subunit protein uS19.